The following is a 337-amino-acid chain: Glyceraldehyde-3-phosphate dehydrogenase (337 aa).

NAD(+)-binding positions include Arg-12–Ile-13, Asp-34, and Arg-79. Residues Ser-150 to Thr-152, Thr-181, Thr-210 to Gly-211, and Arg-233 each bind D-glyceraldehyde 3-phosphate. Residue Cys-151 is the Nucleophile of the active site. Asn-315 is an NAD(+) binding site.

This sequence belongs to the glyceraldehyde-3-phosphate dehydrogenase family. As to quaternary structure, homotetramer.

It localises to the cytoplasm. The enzyme catalyses D-glyceraldehyde 3-phosphate + phosphate + NAD(+) = (2R)-3-phospho-glyceroyl phosphate + NADH + H(+). Its pathway is carbohydrate degradation; glycolysis; pyruvate from D-glyceraldehyde 3-phosphate: step 1/5. The sequence is that of Glyceraldehyde-3-phosphate dehydrogenase (GPD) from Coccidioides immitis (strain RS) (Valley fever fungus).